Here is a 20-residue protein sequence, read N- to C-terminus: Unknown protein NF040 from 2D-PAGE (20 aa).

A TCTP domain is found at 1-20; that stretch reads MKVYTDIFTRDEFLSDSYPM.

The protein belongs to the TCTP family.

This chain is Unknown protein NF040 from 2D-PAGE, found in Naegleria fowleri (Brain eating amoeba).